The sequence spans 457 residues: Oxygen-independent coproporphyrinogen III oxidase (457 aa).

The Radical SAM core domain occupies 47 to 279 (LKNPMPLSLY…EILESLISFL (233 aa)). S-adenosyl-L-methionine is bound at residue tyrosine 56. Cysteine 62 and cysteine 66 together coordinate [4Fe-4S] cluster. Phenylalanine 68 is a binding site for S-adenosyl-L-methionine. Residue cysteine 69 coordinates [4Fe-4S] cluster. Residues glycine 113, 114-115 (GT), glutamate 147, glutamine 174, arginine 186, aspartate 211, alanine 245, and isoleucine 331 each bind S-adenosyl-L-methionine.

Belongs to the anaerobic coproporphyrinogen-III oxidase family. As to quaternary structure, monomer. [4Fe-4S] cluster is required as a cofactor.

The protein resides in the cytoplasm. The catalysed reaction is coproporphyrinogen III + 2 S-adenosyl-L-methionine = protoporphyrinogen IX + 2 5'-deoxyadenosine + 2 L-methionine + 2 CO2. The protein operates within porphyrin-containing compound metabolism; protoporphyrin-IX biosynthesis; protoporphyrinogen-IX from coproporphyrinogen-III (AdoMet route): step 1/1. Involved in the heme biosynthesis. Catalyzes the anaerobic oxidative decarboxylation of propionate groups of rings A and B of coproporphyrinogen III to yield the vinyl groups in protoporphyrinogen IX. This Helicobacter pylori (strain ATCC 700392 / 26695) (Campylobacter pylori) protein is Oxygen-independent coproporphyrinogen III oxidase (hemN).